Reading from the N-terminus, the 325-residue chain is uncharacterized protein (325 aa).

Residues 1 to 75 (MSQPPEHPGN…PPPGYPTHLQ (75 aa)) are disordered. Over residues 24-70 (YPPPGYGAPPPPPGYGPPPGTYLPPGYNAPPPPPGYGPPPGPPPPGY) the composition is skewed to pro residues. Helical transmembrane passes span 96-116 (AVTL…VIGA), 153-173 (IVMF…HAGI), 205-225 (LLIV…GLIF), and 273-293 (LVGE…AALI).

Its subcellular location is the cell membrane. This is an uncharacterized protein from Mycobacterium tuberculosis (strain ATCC 25618 / H37Rv).